A 549-amino-acid polypeptide reads, in one-letter code: MEGVLYKWTNYISGWQPRWFVLEGGTLSYYDSQEDAWKGCKGSIKISVCEIQVHPSDFTRVDLIIPGEQYFYLRAINAAERQKWLVALGTAKACLTDNRTKREKELQENSEALKTKMSELRLYCDLLLQQVNKIQESPLAETSAGSGEGGDETGNLVKSTCTTFLKTLEECMHIASRTFNPDLLSRTPPGSPSVATIKPQKIKSNDPKNLHPGETRKDLINTSGTSAHESGPDNEPPPSPQENISTAHTESGLMEDQNDLIEPNNGSSSSTQDHEEPVEEQQTDGSTEDADHSQEEQQEVSMSPTQNKQEVQEDIQTDLELNETQSENKQEEEDEDKVDTFFSTMSHRFSDIILEEDSGIPTQAFLDSCYAIVPVLDKLGPTVFAPVKIDFVGNIKKIQQKVVSDPESFPTLQSIVLHEVKTEVAQVRNSATEALLWLKRGLKFLKEFLSEINTGVKDVQGALYNAYGKTLRQYHGWVVRGVFALALRAAPSYEGFMAALVSYEGDELKEGFRTGMHRDLDIYLPAMENQLSILDTLYEEYGLESDEIV.

Residues 1 to 93 (MEGVLYKWTN…WLVALGTAKA (93 aa)) form the PH domain. 2 disordered regions span residues 180-245 (NPDL…ENIS) and 257-312 (QNDL…QEVQ). The span at 203 to 219 (KSNDPKNLHPGETRKDL) shows a compositional bias: basic and acidic residues. Acidic residues predominate over residues 276-288 (EPVEEQQTDGSTE). Over residues 299 to 309 (EVSMSPTQNKQ) the composition is skewed to polar residues.

The protein resides in the cytoplasm. Its subcellular location is the golgi apparatus. The protein localises to the trans-Golgi network membrane. It localises to the membrane. Cargo transport protein that is required for apical transport from the trans-Golgi network (TGN) to the plasma membrane. The chain is Pleckstrin homology domain-containing family A member 8 (plekha8) from Danio rerio (Zebrafish).